A 368-amino-acid chain; its full sequence is tRNA(Met) cytidine acetate ligase (368 aa).

ATP contacts are provided by residues 7 to 20 (IAEFNPFHNGHKYL), Gly96, Asn152, and Arg175.

This sequence belongs to the TmcAL family.

The protein resides in the cytoplasm. The catalysed reaction is cytidine(34) in elongator tRNA(Met) + acetate + ATP = N(4)-acetylcytidine(34) in elongator tRNA(Met) + AMP + diphosphate. In terms of biological role, catalyzes the formation of N(4)-acetylcytidine (ac(4)C) at the wobble position of elongator tRNA(Met), using acetate and ATP as substrates. First activates an acetate ion to form acetyladenylate (Ac-AMP) and then transfers the acetyl group to tRNA to form ac(4)C34. The polypeptide is tRNA(Met) cytidine acetate ligase (Streptococcus pyogenes serotype M28 (strain MGAS6180)).